A 465-amino-acid chain; its full sequence is Midnolin (465 aa).

The Ubiquitin-like domain maps to 32–106 (MSLAIHSTTG…LTLVPTVEAG (75 aa)). Disordered stretches follow at residues 185-262 (SVAT…SRKP) and 400-445 (RLRR…GLDF). Composition is skewed to low complexity over residues 195 to 219 (RPVS…PSPV) and 240 to 257 (SPPA…SPTP). Positions 397-424 (QQKRLRRKARRDARGPYHWTPSRKAGRS) are required for nucleolar localization.

As to quaternary structure, interacts with GCK; the interaction occurs preferentially at low glucose levels. Interacts with the proteasome. Expressed at high levels in brain and liver with significantly lower levels in muscle.

It localises to the nucleus. It is found in the cytoplasm. The protein localises to the cytosol. The protein resides in the nucleolus. Its function is as follows. Facilitates the ubiquitin-independent proteasomal degradation of stimulus-induced transcription factors such as FOSB, EGR1, NR4A1, and IRF4 to the proteasome for degradation. Promotes also the degradation of other substrates such as CBX4. Plays a role in inhibiting the activity of glucokinase GCK and both glucose-induced and basal insulin secretion. The sequence is that of Midnolin (Midn) from Mus musculus (Mouse).